Consider the following 131-residue polypeptide: MKKHGILNSHIAKLLADLGHTDTIVIADAGLPVPPGVPKIDLALTLGTPGFREVTKLIADEMVVEKVTAAQEIESVNPGQAAFLKAEFSNQKIDYIPHEAFKKATSQAKAVIRTGEATPYANCILHAGVIF.

Residue His-20 is the Proton donor of the active site. Substrate is bound by residues Asp-28, His-98, and 120–122; that span reads YAN.

Belongs to the RbsD / FucU family. RbsD subfamily. In terms of assembly, homodecamer.

It localises to the cytoplasm. It catalyses the reaction beta-D-ribopyranose = beta-D-ribofuranose. It participates in carbohydrate metabolism; D-ribose degradation; D-ribose 5-phosphate from beta-D-ribopyranose: step 1/2. Catalyzes the interconversion of beta-pyran and beta-furan forms of D-ribose. This chain is D-ribose pyranase, found in Bacillus licheniformis (strain ATCC 14580 / DSM 13 / JCM 2505 / CCUG 7422 / NBRC 12200 / NCIMB 9375 / NCTC 10341 / NRRL NRS-1264 / Gibson 46).